The chain runs to 678 residues: Glycine--tRNA ligase beta subunit (678 aa).

This sequence belongs to the class-II aminoacyl-tRNA synthetase family. Tetramer of two alpha and two beta subunits.

It localises to the cytoplasm. The enzyme catalyses tRNA(Gly) + glycine + ATP = glycyl-tRNA(Gly) + AMP + diphosphate. This Streptococcus pneumoniae (strain ATCC BAA-255 / R6) protein is Glycine--tRNA ligase beta subunit.